Reading from the N-terminus, the 341-residue chain is Endolytic peptidoglycan transglycosylase RlpA (341 aa).

The signal sequence occupies residues 1-26 (MSKRVRSSLILPAVCGLGLAAVLLSS). A lipid anchor (N-palmitoyl cysteine) is attached at C27. Residue C27 is the site of S-diacylglycerol cysteine attachment. One can recognise an SPOR domain in the interval 260-341 (SLPADGLYLQ…LGQPTLVRPD (82 aa)).

Belongs to the RlpA family.

The protein resides in the cell membrane. In terms of biological role, lytic transglycosylase with a strong preference for naked glycan strands that lack stem peptides. Required for efficient separation of daughter cells and maintenance of rod shape. In Pseudomonas aeruginosa (strain UCBPP-PA14), this protein is Endolytic peptidoglycan transglycosylase RlpA.